A 154-amino-acid chain; its full sequence is Large ribosomal subunit protein uL13 (154 aa).

Belongs to the universal ribosomal protein uL13 family. In terms of assembly, part of the 50S ribosomal subunit.

Functionally, this protein is one of the early assembly proteins of the 50S ribosomal subunit, although it is not seen to bind rRNA by itself. It is important during the early stages of 50S assembly. This is Large ribosomal subunit protein uL13 from Brucella abortus (strain S19).